The sequence spans 573 residues: Glutathione/L-cysteine transport system ATP-binding/permease protein CydC (573 aa).

Residues 1-15 are Cytoplasmic-facing; sequence MRALLPYLALYKRHK. Helical transmembrane passes span 16 to 36 and 37 to 57; these read WMLSLGIVLAIVTLLASIGLL and TLSGWFLSASAVAGVAGLYSF. One can recognise an ABC transmembrane type-1 domain in the interval 20–306; sequence LGIVLAIVTL…VTGAFQHLGQ (287 aa). Topologically, residues 58–136 are cytoplasmic; it reads NYMLPAAGVR…VDTLDHLYLR (79 aa). Residues 137–157 form a helical membrane-spanning segment; that stretch reads VISPLVGAFVVIMVVTIGLSF. Residues 158–161 are Periplasmic-facing; sequence LDFT. The helical transmembrane segment at 162–182 threads the bilayer; it reads LAFTLGGIMLLTLFLMPPLFY. Topologically, residues 183-249 are cytoplasmic; sequence RAGKSTGQNL…QSELTALSQA (67 aa). The chain crosses the membrane as a helical span at residues 250–270; sequence IMLLIGALAVILMLWMASGGV. Over 271–276 the chain is Periplasmic; that stretch reads GGNAQP. Residues 277–297 traverse the membrane as a helical segment; the sequence is GALIALFVFCALAAFEALAPV. Residues 298 to 573 lie on the Cytoplasmic side of the membrane; sequence TGAFQHLGQV…GRYYQFKQGL (276 aa). In terms of domain architecture, ABC transporter spans 339–572; the sequence is LTLRDVQFTY…QGRYYQFKQG (234 aa). 373 to 380 contributes to the ATP binding site; that stretch reads GRTGCGKS.

The protein belongs to the ABC transporter superfamily. Cysteine exporter (TC 3.A.1.129.1) family. As to quaternary structure, forms a heterodimer with CydD.

It is found in the cell inner membrane. It carries out the reaction L-cysteine(in) + ATP + H2O = L-cysteine(out) + ADP + phosphate + H(+). The catalysed reaction is glutathione(in) + ATP + H2O = glutathione(out) + ADP + phosphate + H(+). With respect to regulation, ATPase activity is stimulated by various thiol compounds. The presence of heme leads to a further enhancement of thiol-stimulated ATPase activity, although a large excess of heme inhibits activity. Glutathione transport is inhibited by sodium orthovanadate, an inhibitor of ABC-type transport systems, but not by the proton ionophore carbonyl cyanide m-chlorophenylhydrazone (CCCP). In terms of biological role, part of the ABC transporter complex CydDC that exports the reduced low-molecular-weight thiols cysteine and glutathione to the periplasm. Export of these thiol-containing redox-active molecules may be crucial for redox homeostasis in the periplasm, permitting correct assembly of various respiratory complexes and formation of correct disulfide bonds in periplasmic and secreted proteins. CydC contains transmembrane domains (TMD), which form a pore in the inner membrane, and an ATP-binding domain (NBD), which is responsible for energy generation. Required for the assembly of functional cytochrome bd-type quinol oxidases and periplasmic c-type cytochromes. Overexpression of CydDC under anaerobic conditions also results in the formation of a heme biosynthesis-derived pigment, P-574. CydDC binds heme b, but heme is probably not transported by the complex and instead has a role in regulating ATPase activity. Conversely, a more recent study suggests an alternative function of CydDC: authors suggest that CydDC does not mediate the export of L-cysteine but rather reduces cytoplasmic L-cystine to L-cysteine. The principle function of CydDC would be to maintain the reduced state of cytoplasmic L-cysteine, thereby providing an important connection between sulfur metabolism, oxidative stress and resistance to antibiotics. In Escherichia coli (strain K12), this protein is Glutathione/L-cysteine transport system ATP-binding/permease protein CydC.